Here is a 219-residue protein sequence, read N- to C-terminus: Protein-L-isoaspartate O-methyltransferase (219 aa).

The active site involves Ser-64.

It belongs to the methyltransferase superfamily. L-isoaspartyl/D-aspartyl protein methyltransferase family.

Its subcellular location is the cytoplasm. It carries out the reaction [protein]-L-isoaspartate + S-adenosyl-L-methionine = [protein]-L-isoaspartate alpha-methyl ester + S-adenosyl-L-homocysteine. In terms of biological role, catalyzes the methyl esterification of L-isoaspartyl residues in peptides and proteins that result from spontaneous decomposition of normal L-aspartyl and L-asparaginyl residues. It plays a role in the repair and/or degradation of damaged proteins. The chain is Protein-L-isoaspartate O-methyltransferase from Chlorobaculum parvum (strain DSM 263 / NCIMB 8327) (Chlorobium vibrioforme subsp. thiosulfatophilum).